Reading from the N-terminus, the 386-residue chain is Succinate--CoA ligase [ADP-forming] subunit beta (386 aa).

An ATP-grasp domain is found at 9-235; sequence KELFAKHDVP…REEEDPLESA (227 aa). ATP contacts are provided by residues lysine 44, 51-53, alanine 93, and glutamate 98; that span reads GRG. Asparagine 190 and aspartate 204 together coordinate Mg(2+). Substrate-binding positions include asparagine 255 and 317-319; that span reads GIT.

Belongs to the succinate/malate CoA ligase beta subunit family. In terms of assembly, heterotetramer of two alpha and two beta subunits. The cofactor is Mg(2+).

It catalyses the reaction succinate + ATP + CoA = succinyl-CoA + ADP + phosphate. The catalysed reaction is GTP + succinate + CoA = succinyl-CoA + GDP + phosphate. It participates in carbohydrate metabolism; tricarboxylic acid cycle; succinate from succinyl-CoA (ligase route): step 1/1. In terms of biological role, succinyl-CoA synthetase functions in the citric acid cycle (TCA), coupling the hydrolysis of succinyl-CoA to the synthesis of either ATP or GTP and thus represents the only step of substrate-level phosphorylation in the TCA. The beta subunit provides nucleotide specificity of the enzyme and binds the substrate succinate, while the binding sites for coenzyme A and phosphate are found in the alpha subunit. The polypeptide is Succinate--CoA ligase [ADP-forming] subunit beta (Nocardioides sp. (strain ATCC BAA-499 / JS614)).